A 149-amino-acid chain; its full sequence is Large ribosomal subunit protein uL13 (149 aa).

This sequence belongs to the universal ribosomal protein uL13 family. As to quaternary structure, part of the 50S ribosomal subunit.

Its function is as follows. This protein is one of the early assembly proteins of the 50S ribosomal subunit, although it is not seen to bind rRNA by itself. It is important during the early stages of 50S assembly. The chain is Large ribosomal subunit protein uL13 from Gemmatimonas aurantiaca (strain DSM 14586 / JCM 11422 / NBRC 100505 / T-27).